The sequence spans 231 residues: Ribose-5-phosphate isomerase A (231 aa).

Residues T31 to T34, D86 to D89, and K100 to G103 each bind substrate. The active-site Proton acceptor is E109. Substrate is bound at residue K127.

Belongs to the ribose 5-phosphate isomerase family. Homodimer.

It carries out the reaction aldehydo-D-ribose 5-phosphate = D-ribulose 5-phosphate. It functions in the pathway carbohydrate degradation; pentose phosphate pathway; D-ribose 5-phosphate from D-ribulose 5-phosphate (non-oxidative stage): step 1/1. Functionally, catalyzes the reversible conversion of ribose-5-phosphate to ribulose 5-phosphate. The polypeptide is Ribose-5-phosphate isomerase A (Gluconobacter oxydans (strain 621H) (Gluconobacter suboxydans)).